Here is a 224-residue protein sequence, read N- to C-terminus: Octanoyltransferase (224 aa).

Positions 38–213 constitute a BPL/LPL catalytic domain; sequence SATVDELWWV…YLVRRLGYSA (176 aa). Residues 77 to 84, 144 to 146, and 157 to 159 contribute to the substrate site; these read RGGQVTYH, SLG, and GLS. C175 acts as the Acyl-thioester intermediate in catalysis.

Belongs to the LipB family.

The protein resides in the cytoplasm. The enzyme catalyses octanoyl-[ACP] + L-lysyl-[protein] = N(6)-octanoyl-L-lysyl-[protein] + holo-[ACP] + H(+). It functions in the pathway protein modification; protein lipoylation via endogenous pathway; protein N(6)-(lipoyl)lysine from octanoyl-[acyl-carrier-protein]: step 1/2. Catalyzes the transfer of endogenously produced octanoic acid from octanoyl-acyl-carrier-protein onto the lipoyl domains of lipoate-dependent enzymes. Lipoyl-ACP can also act as a substrate although octanoyl-ACP is likely to be the physiological substrate. The protein is Octanoyltransferase of Nitrosococcus oceani (strain ATCC 19707 / BCRC 17464 / JCM 30415 / NCIMB 11848 / C-107).